A 252-amino-acid chain; its full sequence is F-box/SPRY domain-containing protein 1 (252 aa).

An F-box domain is found at 1 to 48 (MVDPLCNYNVLESIFSYLELNDLNRCSQVCKSWYHFLNDENSDVWRWH). The B30.2/SPRY domain occupies 58–250 (VKSDLLSSVT…VSMVYLGTPL (193 aa)).

This sequence belongs to the FBXO45/Fsn family. As to quaternary structure, component of an E3 ubiquitin ligase complex composed of hiw and Fsn.

The protein localises to the synapse. The protein operates within protein modification; protein ubiquitination. Required in the presynaptic motoneuron to down-regulate the levels of wnd and restrain synaptic terminal growth at the neuromuscular junction (NMJ). In Drosophila grimshawi (Hawaiian fruit fly), this protein is F-box/SPRY domain-containing protein 1.